A 975-amino-acid polypeptide reads, in one-letter code: Monofunctional C1-tetrahydrofolate synthase, mitochondrial (975 aa).

The N-terminal 30 residues, 1-30 (MSARLPFVLRRLARPQHPGSPRRLPSLCRA), are a transit peptide targeting the mitochondrion. Residues 13–45 (ARPQHPGSPRRLPSLCRASSGRGSGCGGGEGLL) are disordered. Residues 31–345 (SSGRGSGCGG…REQQHRRWRL (315 aa)) are methylenetetrahydrofolate dehydrogenase and cyclohydrolase. Residues 34-44 (RGSGCGGGEGL) show a composition bias toward gly residues. K187 is subject to N6-acetyllysine; alternate. K187 carries the N6-succinyllysine; alternate modification. The segment at 346 to 975 (HCLKLQPLSP…TETEQVKGLF (630 aa)) is formyltetrahydrofolate synthetase. A Phosphoserine modification is found at S354. 420 to 427 (TPLGEGKS) is an ATP binding site. An N6-succinyllysine modification is found at K593.

In the N-terminal section; belongs to the tetrahydrofolate dehydrogenase/cyclohydrolase family. It in the C-terminal section; belongs to the formate--tetrahydrofolate ligase family. As to quaternary structure, homodimer.

It localises to the mitochondrion. It catalyses the reaction (6S)-5,6,7,8-tetrahydrofolate + formate + ATP = (6R)-10-formyltetrahydrofolate + ADP + phosphate. Its pathway is one-carbon metabolism; tetrahydrofolate interconversion. In terms of biological role, may provide the missing metabolic reaction required to link the mitochondria and the cytoplasm in the mammalian model of one-carbon folate metabolism complementing thus the enzymatic activities of MTHFD2. The polypeptide is Monofunctional C1-tetrahydrofolate synthase, mitochondrial (MTHFD1L) (Bos taurus (Bovine)).